The sequence spans 98 residues: U-scoloptoxin(16)-Er9a (98 aa).

An N-terminal signal peptide occupies residues 1–24 (MVSYLCMSVSSGWLSIGKIAIKDG).

This sequence belongs to the scoloptoxin-16 family. Contains 4 disulfide bonds. As to expression, expressed by the venom gland.

The protein resides in the secreted. This chain is U-scoloptoxin(16)-Er9a, found in Ethmostigmus rubripes (Giant centipede).